Here is a 368-residue protein sequence, read N- to C-terminus: Agmatine deiminase (368 aa).

Cys-357 functions as the Amidino-cysteine intermediate in the catalytic mechanism.

This sequence belongs to the agmatine deiminase family. Homodimer.

It carries out the reaction agmatine + H2O = N-carbamoylputrescine + NH4(+). The protein operates within amine and polyamine biosynthesis; putrescine biosynthesis via agmatine pathway; N-carbamoylputrescine from agmatine: step 1/1. In terms of biological role, mediates the hydrolysis of agmatine into N-carbamoylputrescine in the arginine decarboxylase (ADC) pathway of putrescine biosynthesis, a basic polyamine. In Ectopseudomonas mendocina (strain ymp) (Pseudomonas mendocina), this protein is Agmatine deiminase.